We begin with the raw amino-acid sequence, 184 residues long: ATP-dependent protease subunit HslV (184 aa).

T12 is a catalytic residue. G167, C170, and T173 together coordinate Na(+).

Belongs to the peptidase T1B family. HslV subfamily. A double ring-shaped homohexamer of HslV is capped on each side by a ring-shaped HslU homohexamer. The assembly of the HslU/HslV complex is dependent on binding of ATP.

Its subcellular location is the cytoplasm. It carries out the reaction ATP-dependent cleavage of peptide bonds with broad specificity.. Allosterically activated by HslU binding. Its function is as follows. Protease subunit of a proteasome-like degradation complex believed to be a general protein degrading machinery. This chain is ATP-dependent protease subunit HslV, found in Wolbachia sp. subsp. Drosophila simulans (strain wRi).